A 565-amino-acid polypeptide reads, in one-letter code: Adenine deaminase (565 aa).

It belongs to the metallo-dependent hydrolases superfamily. Adenine deaminase family. Mn(2+) serves as cofactor.

The catalysed reaction is adenine + H2O + H(+) = hypoxanthine + NH4(+). The polypeptide is Adenine deaminase (Methylobacterium nodulans (strain LMG 21967 / CNCM I-2342 / ORS 2060)).